The sequence spans 607 residues: UvrABC system protein C (607 aa).

Residues 16 to 94 (GRPGVYRMFD…IKEWRPPYNI (79 aa)) form the GIY-YIG domain. In terms of domain architecture, UVR spans 203 to 238 (NALTDELSGAMEQAASTLDFERAAELRDQISLLRRV).

The protein belongs to the UvrC family. In terms of assembly, interacts with UvrB in an incision complex.

The protein resides in the cytoplasm. In terms of biological role, the UvrABC repair system catalyzes the recognition and processing of DNA lesions. UvrC both incises the 5' and 3' sides of the lesion. The N-terminal half is responsible for the 3' incision and the C-terminal half is responsible for the 5' incision. In Pseudomonas fluorescens (strain SBW25), this protein is UvrABC system protein C.